The following is a 604-amino-acid chain: Matrix metalloproteinase-21 (604 aa).

The signal sequence occupies residues M1 to S22. Residues E23–R180 constitute a propeptide that is removed on maturation. The disordered stretch occupies residues K132 to K175. Positions P133–N140 match the Cysteine switch motif. Residue C135 coordinates Zn(2+). 2 N-linked (GlcNAc...) asparagine glycosylation sites follow: N158 and N165. H318 contributes to the Zn(2+) binding site. Residue E319 is part of the active site. The Zn(2+) site is built by H322 and H328. C364 and C595 are joined by a disulfide. Hemopexin repeat units follow at residues E365 to I424, V426 to I482, P483 to V531, and K538 to I594. 2 N-linked (GlcNAc...) asparagine glycosylation sites follow: N404 and N407.

Belongs to the peptidase M10A family. It depends on Zn(2+) as a cofactor. The cofactor is Ca(2+). The precursor is cleaved by a furin endopeptidase.

The protein resides in the secreted. Functionally, plays a specialized role in the generation of left-right asymmetry during embryogenesis. May act as a negative regulator of the NOTCH-signaling pathway. The polypeptide is Matrix metalloproteinase-21 (mmp21) (Xenopus laevis (African clawed frog)).